A 188-amino-acid chain; its full sequence is MPLREFKIVVLGSGGVGKSALTVQFVQGIFVEKYDPTIEDSYRKQVEVDGQQCMLEILDTAGTEQFTAMRDLYMKNGQGFVLVYSIIAMSTFNDLPDLREQILRVKDCDDVPMVLVGNKCDLAEQRVISTEQGDELARKFGGCAFLEASAKNKINVEQIFYDLIRQINRKNPGPTNKKEKKSGGCILL.

12-19 (GSGGVGKS) is a binding site for GTP. Residues 34–42 (YDPTIEDSY) carry the Effector region motif. Residues 59 to 63 (DTAGT) and 118 to 121 (NKCD) each bind GTP. C185 bears the Cysteine methyl ester mark. The S-geranylgeranyl cysteine moiety is linked to residue C185. Residues 186–188 (ILL) constitute a propeptide, removed in mature form.

The protein belongs to the small GTPase superfamily. Ras family.

Its subcellular location is the cell membrane. It catalyses the reaction GTP + H2O = GDP + phosphate + H(+). The protein is Ras-related protein Rap-1 (RAP1) of Physarum polycephalum (Slime mold).